A 135-amino-acid polypeptide reads, in one-letter code: UPF0201 protein TON_1346 (135 aa).

Belongs to the UPF0201 family.

In Thermococcus onnurineus (strain NA1), this protein is UPF0201 protein TON_1346.